The primary structure comprises 255 residues: Keratin-associated protein 10-2 (255 aa).

22 tandem repeats follow at residues Cys26 to Pro30, Cys36 to Ala40, Cys57 to Ala61, Cys79 to Ser83, Cys89 to Ser93, Cys99 to Val103, Cys104 to Val108, Cys109 to Val113, Cys114 to Ser118, Cys120 to Ser124, Cys130 to Ser134, Cys145 to Val149, Cys150 to Thr154, Cys162 to Ser166, Cys172 to Ser176, Cys182 to Val186, Cys187 to Val191, Cys192 to Ile196, Cys197 to Val201, Cys209 to Ser213, Cys219 to Ser223, and Cys224 to Ser228. A 22 X 5 AA repeats of C-C-X(3) region spans residues Cys26–Ser228.

This sequence belongs to the KRTAP type 10 family. As to quaternary structure, interacts with hair keratins. In terms of tissue distribution, restricted to a narrow region of the hair fiber cuticle, lying approximately 20 cell layers above the apex of the dermal papilla of the hair root; not detected in any other tissues.

Its function is as follows. In the hair cortex, hair keratin intermediate filaments are embedded in an interfilamentous matrix, consisting of hair keratin-associated proteins (KRTAP), which are essential for the formation of a rigid and resistant hair shaft through their extensive disulfide bond cross-linking with abundant cysteine residues of hair keratins. The matrix proteins include the high-sulfur and high-glycine-tyrosine keratins. The chain is Keratin-associated protein 10-2 (KRTAP10-2) from Homo sapiens (Human).